Reading from the N-terminus, the 627-residue chain is Chaperone protein DnaK (627 aa).

Thr197 bears the Phosphothreonine; by autocatalysis mark. Low complexity predominate over residues 598–611 (AYAKEQGGQQGAAD). The disordered stretch occupies residues 598–627 (AYAKEQGGQQGAADAGKKADDDDVIDAEVE). Acidic residues predominate over residues 618 to 627 (DDDVIDAEVE).

Belongs to the heat shock protein 70 family.

Its function is as follows. Acts as a chaperone. This is Chaperone protein DnaK from Sulfurovum sp. (strain NBC37-1).